The primary structure comprises 176 residues: HTH-type transcriptional regulator DctR (176 aa).

Residues 109–174 form the HTH luxR-type domain; that stretch reads VPEADVSLSR…ELVRHQHINY (66 aa). Residues 133-152 constitute a DNA-binding region (H-T-H motif); sequence TEDILEKLKISLKTFYCHKH.

Its function is as follows. May act as a transcriptional regulator of dctA. This Escherichia coli O6:H1 (strain CFT073 / ATCC 700928 / UPEC) protein is HTH-type transcriptional regulator DctR (dctR).